A 379-amino-acid polypeptide reads, in one-letter code: tRNA-specific 2-thiouridylase MnmA (379 aa).

ATP is bound by residues Gly9–Ser16 and Met35. Positions Asn95–Asp97 are interaction with target base in tRNA. The Nucleophile role is filled by Cys100. Cys100 and Cys198 are joined by a disulfide. Residue Gly124 coordinates ATP. The segment at Lys148–Gln150 is interaction with tRNA. The Cysteine persulfide intermediate role is filled by Cys198. Positions Arg325–Tyr326 are interaction with tRNA.

The protein belongs to the MnmA/TRMU family.

It is found in the cytoplasm. The enzyme catalyses S-sulfanyl-L-cysteinyl-[protein] + uridine(34) in tRNA + AH2 + ATP = 2-thiouridine(34) in tRNA + L-cysteinyl-[protein] + A + AMP + diphosphate + H(+). Functionally, catalyzes the 2-thiolation of uridine at the wobble position (U34) of tRNA, leading to the formation of s(2)U34. This is tRNA-specific 2-thiouridylase MnmA from Acidovorax sp. (strain JS42).